Here is a 227-residue protein sequence, read N- to C-terminus: Cytochrome c oxidase subunit 2 (227 aa).

Residues 1–14 are Mitochondrial intermembrane-facing; that stretch reads MAYPFQLGLQDATS. The chain crosses the membrane as a helical span at residues 15 to 45; that stretch reads PIMEELLHFHDHTLMIVFLISSLVLYIISLM. Residues 46–59 are Mitochondrial matrix-facing; that stretch reads LTTKLTHTSTMDAQ. Residues 60 to 87 traverse the membrane as a helical segment; it reads EVETVWTILPAIILILIALPSLRILYMM. At 88 to 227 the chain is on the mitochondrial intermembrane side; sequence DEINNPSLTV…YFETWSALMV (140 aa). Residues His161, Cys196, Glu198, Cys200, His204, and Met207 each contribute to the Cu cation site. Mg(2+) is bound at residue Glu198. Tyr218 is modified (phosphotyrosine).

This sequence belongs to the cytochrome c oxidase subunit 2 family. As to quaternary structure, component of the cytochrome c oxidase (complex IV, CIV), a multisubunit enzyme composed of 14 subunits. The complex is composed of a catalytic core of 3 subunits MT-CO1, MT-CO2 and MT-CO3, encoded in the mitochondrial DNA, and 11 supernumerary subunits COX4I, COX5A, COX5B, COX6A, COX6B, COX6C, COX7A, COX7B, COX7C, COX8 and NDUFA4, which are encoded in the nuclear genome. The complex exists as a monomer or a dimer and forms supercomplexes (SCs) in the inner mitochondrial membrane with NADH-ubiquinone oxidoreductase (complex I, CI) and ubiquinol-cytochrome c oxidoreductase (cytochrome b-c1 complex, complex III, CIII), resulting in different assemblies (supercomplex SCI(1)III(2)IV(1) and megacomplex MCI(2)III(2)IV(2)). Found in a complex with TMEM177, COA6, COX18, COX20, SCO1 and SCO2. Interacts with TMEM177 in a COX20-dependent manner. Interacts with COX20. Interacts with COX16. Requires Cu cation as cofactor.

It is found in the mitochondrion inner membrane. The enzyme catalyses 4 Fe(II)-[cytochrome c] + O2 + 8 H(+)(in) = 4 Fe(III)-[cytochrome c] + 2 H2O + 4 H(+)(out). Functionally, component of the cytochrome c oxidase, the last enzyme in the mitochondrial electron transport chain which drives oxidative phosphorylation. The respiratory chain contains 3 multisubunit complexes succinate dehydrogenase (complex II, CII), ubiquinol-cytochrome c oxidoreductase (cytochrome b-c1 complex, complex III, CIII) and cytochrome c oxidase (complex IV, CIV), that cooperate to transfer electrons derived from NADH and succinate to molecular oxygen, creating an electrochemical gradient over the inner membrane that drives transmembrane transport and the ATP synthase. Cytochrome c oxidase is the component of the respiratory chain that catalyzes the reduction of oxygen to water. Electrons originating from reduced cytochrome c in the intermembrane space (IMS) are transferred via the dinuclear copper A center (CU(A)) of subunit 2 and heme A of subunit 1 to the active site in subunit 1, a binuclear center (BNC) formed by heme A3 and copper B (CU(B)). The BNC reduces molecular oxygen to 2 water molecules using 4 electrons from cytochrome c in the IMS and 4 protons from the mitochondrial matrix. This chain is Cytochrome c oxidase subunit 2 (MT-CO2), found in Canis lupus familiaris (Dog).